A 227-amino-acid polypeptide reads, in one-letter code: LexA repressor (227 aa).

Residues 26–46 (FDEMKEALDLASKSGIHRLIT) constitute a DNA-binding region (H-T-H motif). Catalysis depends on for autocatalytic cleavage activity residues serine 147 and lysine 185.

The protein belongs to the peptidase S24 family. As to quaternary structure, homodimer.

The catalysed reaction is Hydrolysis of Ala-|-Gly bond in repressor LexA.. Represses a number of genes involved in the response to DNA damage (SOS response), including recA and lexA. In the presence of single-stranded DNA, RecA interacts with LexA causing an autocatalytic cleavage which disrupts the DNA-binding part of LexA, leading to derepression of the SOS regulon and eventually DNA repair. This is LexA repressor from Hyphomonas neptunium (strain ATCC 15444).